Consider the following 216-residue polypeptide: Sperm microtubule inner protein 8 (216 aa).

As to quaternary structure, microtubule inner protein component of sperm flagellar doublet microtubules. In terms of tissue distribution, expressed in sperm.

It localises to the cytoplasm. Its subcellular location is the cytoskeleton. It is found in the flagellum axoneme. Functionally, microtubule inner protein (MIP) part of the dynein-decorated doublet microtubules (DMTs) in flagellum axoneme. May serve to reinforce and thus stabilize the microtubule structure in the sperm flagella. The chain is Sperm microtubule inner protein 8 (SPMIP8) from Bos taurus (Bovine).